A 417-amino-acid chain; its full sequence is Gamma-glutamyl phosphate reductase (417 aa).

This sequence belongs to the gamma-glutamyl phosphate reductase family.

It localises to the cytoplasm. It catalyses the reaction L-glutamate 5-semialdehyde + phosphate + NADP(+) = L-glutamyl 5-phosphate + NADPH + H(+). It participates in amino-acid biosynthesis; L-proline biosynthesis; L-glutamate 5-semialdehyde from L-glutamate: step 2/2. Functionally, catalyzes the NADPH-dependent reduction of L-glutamate 5-phosphate into L-glutamate 5-semialdehyde and phosphate. The product spontaneously undergoes cyclization to form 1-pyrroline-5-carboxylate. In Chlorobium phaeobacteroides (strain BS1), this protein is Gamma-glutamyl phosphate reductase.